Consider the following 366-residue polypeptide: NADP-dependent isopropanol dehydrogenase (366 aa).

Positions 43, 65, 66, and 156 each coordinate Zn(2+). NADP(+)-binding positions include 181–184 (IGPV), 204–206 (GSR), tyrosine 224, 271–273 (VNY), and lysine 346.

The protein belongs to the zinc-containing alcohol dehydrogenase family. In terms of assembly, homodimer. It depends on Zn(2+) as a cofactor.

Its subcellular location is the cytoplasm. It catalyses the reaction propan-2-ol + NADP(+) = acetone + NADPH + H(+). Alcohol dehydrogenase with a preference for medium chain secondary alcohols, such as 2-butanol and isopropanol. Has very low activity with primary alcohols, such as ethanol. Under physiological conditions, the enzyme reduces aldehydes and 2-ketones to produce secondary alcohols. Is also active with acetaldehyde and propionaldehyde. The sequence is that of NADP-dependent isopropanol dehydrogenase from Entamoeba histolytica (strain ATCC 30459 / HM-1:IMSS / ABRM).